The sequence spans 340 residues: Ferrochelatase (340 aa).

2 residues coordinate Fe cation: His189 and Glu292.

Belongs to the ferrochelatase family.

The protein resides in the cytoplasm. The enzyme catalyses heme b + 2 H(+) = protoporphyrin IX + Fe(2+). The protein operates within porphyrin-containing compound metabolism; protoheme biosynthesis; protoheme from protoporphyrin-IX: step 1/1. Its function is as follows. Catalyzes the ferrous insertion into protoporphyrin IX. The sequence is that of Ferrochelatase from Pseudomonas fluorescens biotype C.